We begin with the raw amino-acid sequence, 471 residues long: Alpha-galactosidase (471 aa).

The first 18 residues, 1 to 18, serve as a signal peptide directing secretion; sequence MSYIYLFITAAAVTGALG. The cysteines at positions 42 and 74 are disulfide-linked. Substrate contacts are provided by Asp-72 and Asp-73. N-linked (GlcNAc...) asparagine glycosylation occurs at Asn-82. Cys-121 and Cys-151 form a disulfide bridge. Lys-147 lines the substrate pocket. Asp-149 acts as the Nucleophile in catalysis. The N-linked (GlcNAc...) asparagine glycan is linked to Asn-175. Arg-205 provides a ligand contact to substrate. Residue Asp-209 is the Proton donor of the active site. Disulfide bonds link Cys-221-Cys-237 and Cys-223-Cys-230. Residue Gln-251 coordinates substrate. Residues Asn-270, Asn-361, Asn-370, Asn-417, Asn-422, Asn-435, and Asn-454 are each glycosylated (N-linked (GlcNAc...) asparagine).

The protein belongs to the glycosyl hydrolase 27 family. In terms of assembly, homotetramer.

Its subcellular location is the secreted. It carries out the reaction Hydrolysis of terminal, non-reducing alpha-D-galactose residues in alpha-D-galactosides, including galactose oligosaccharides, galactomannans and galactolipids.. This Saccharomyces mikatae (Yeast) protein is Alpha-galactosidase (MEL).